Reading from the N-terminus, the 1385-residue chain is DNA-directed RNA polymerase subunit beta (1385 aa).

It belongs to the RNA polymerase beta chain family. As to quaternary structure, the RNAP catalytic core consists of 2 alpha, 1 beta, 1 beta' and 1 omega subunit. When a sigma factor is associated with the core the holoenzyme is formed, which can initiate transcription.

The enzyme catalyses RNA(n) + a ribonucleoside 5'-triphosphate = RNA(n+1) + diphosphate. Its function is as follows. DNA-dependent RNA polymerase catalyzes the transcription of DNA into RNA using the four ribonucleoside triphosphates as substrates. This Sulfurovum sp. (strain NBC37-1) protein is DNA-directed RNA polymerase subunit beta.